Consider the following 459-residue polypeptide: MNRLPSSASALACSAHALNLIEKQTLDHEEMKALNREVIEYFKEHVNPGFLEYRKSVTAGGDYGAVEWQAGGLNTLVDTQGQEFIDCLGGFGIFNVGHRNPVVVSAVQNQLAKQPLHSQELLDPLRAMLAKTLAALTPGKLKYSFFCNSGTESVEAALKLAKAYQSPRGKFTFIATSGAFHGKSLGALSATAKSTFRKPFMPLLPGFRHVPFGHIEAMRTALSECKKTGDDVAAVILEPIQGEGGVILPPPGYLTAVRKLCDEFGALMILDEVQTGMGRTGKMFACEHENVQPDILCLAKALGGGVMPIGATIATEEVFSVLFDNPFLHTTTFGGNPLACAAALATINVLLEQNLPAQAEQKGDMLLDGFRQLAREYPDLVQEARGKGMLMAIEFVDNEIGYNFASEMFRQRVLVAGTLNNAKTIRIEPPLTLTIEQCELVIKAARKALAAMRVSVEEA.

Residues 150 to 151 (GT) and Gln274 contribute to the pyridoxal 5'-phosphate site. An N6-(pyridoxal phosphate)lysine modification is found at Lys300. Thr332 lines the pyridoxal 5'-phosphate pocket.

Belongs to the class-III pyridoxal-phosphate-dependent aminotransferase family. Putrescine aminotransferase subfamily. The cofactor is pyridoxal 5'-phosphate.

It carries out the reaction an alkane-alpha,omega-diamine + 2-oxoglutarate = an omega-aminoaldehyde + L-glutamate. It catalyses the reaction putrescine + 2-oxoglutarate = 1-pyrroline + L-glutamate + H2O. The enzyme catalyses cadaverine + 2-oxoglutarate = 5-aminopentanal + L-glutamate. The protein operates within amine and polyamine degradation; putrescine degradation; 4-aminobutanal from putrescine (transaminase route): step 1/1. In terms of biological role, catalyzes the aminotransferase reaction from putrescine to 2-oxoglutarate, leading to glutamate and 4-aminobutanal, which spontaneously cyclizes to form 1-pyrroline. This is the first step in one of two pathways for putrescine degradation, where putrescine is converted into 4-aminobutanoate (gamma-aminobutyrate or GABA) via 4-aminobutanal. Also functions as a cadaverine transaminase in a a L-lysine degradation pathway to succinate that proceeds via cadaverine, glutarate and L-2-hydroxyglutarate. This Escherichia fergusonii (strain ATCC 35469 / DSM 13698 / CCUG 18766 / IAM 14443 / JCM 21226 / LMG 7866 / NBRC 102419 / NCTC 12128 / CDC 0568-73) protein is Putrescine aminotransferase.